Consider the following 864-residue polypeptide: Leucine--tRNA ligase (864 aa).

The 'HIGH' region motif lies at 42-52; that stretch reads PYPSGKLHMGH. Residues 624-628 carry the 'KMSKS' region motif; it reads KMSKS. Residue Lys627 participates in ATP binding.

Belongs to the class-I aminoacyl-tRNA synthetase family.

The protein localises to the cytoplasm. It catalyses the reaction tRNA(Leu) + L-leucine + ATP = L-leucyl-tRNA(Leu) + AMP + diphosphate. The chain is Leucine--tRNA ligase from Burkholderia ambifaria (strain ATCC BAA-244 / DSM 16087 / CCUG 44356 / LMG 19182 / AMMD) (Burkholderia cepacia (strain AMMD)).